Reading from the N-terminus, the 318-residue chain is Peroxisomal targeting signal 2 receptor (318 aa).

6 WD repeats span residues 60 to 91, 104 to 136, 148 to 179, 191 to 222, 235 to 266, and 279 to 310; these read DWND…QLWD, EHTQ…KVWD, GHES…RIWD, AHQT…RGWD, GHTY…RFWN, and HHTE…KIYD.

It belongs to the WD repeat peroxin-7 family. As to quaternary structure, interacts with PEX5; interaction only takes place when PEX7 is associated with cargo proteins. Interacts with VWA8.

It localises to the cytoplasm. The protein localises to the cytosol. Its subcellular location is the peroxisome matrix. Receptor required for the peroxisomal import of proteins containing a C-terminal PTS2-type peroxisomal targeting signal. Specifically binds to cargo proteins containing a PTS2 peroxisomal targeting signal in the cytosol. Cargo protein-binding triggers interaction with PEX5 and formation of a ternary complex composed of PEX5 and PEX7 along with PTS2-containing cargo proteins, which is tranlocated into peroxisomes by passing through the PEX13-PEX14 docking complex. This chain is Peroxisomal targeting signal 2 receptor, found in Mus musculus (Mouse).